Consider the following 482-residue polypeptide: uncharacterized protein (482 aa).

One can recognise an HTH gntR-type domain in the interval 12-80 (LPKYRQIVHF…MGKGTVVINN (69 aa)). A DNA-binding region (H-T-H motif) is located at residues 40–59 (QRTLAKDFQVNRSTVITALE). Lys-325 is modified (N6-(pyridoxal phosphate)lysine).

This sequence in the C-terminal section; belongs to the class-I pyridoxal-phosphate-dependent aminotransferase family. Pyridoxal 5'-phosphate is required as a cofactor.

This is an uncharacterized protein from Bacillus subtilis (strain 168).